The chain runs to 356 residues: Glutamine synthetase cytosolic isozyme 1-4 (356 aa).

The residue at position 2 (S2) is an N-acetylserine. Phosphoserine is present on residues S2 and S48. Residues I19–G99 form the GS beta-grasp domain. The segment at A37–D66 is disordered. Positions K106 to P356 constitute a GS catalytic domain.

It belongs to the glutamine synthetase family. Homooctamer. Interacts with GRF3. In terms of tissue distribution, expressed in the pericycle in the region of lateral root emergence.

Its subcellular location is the cytoplasm. It carries out the reaction L-glutamate + NH4(+) + ATP = L-glutamine + ADP + phosphate + H(+). High-affinity glutamine synthetase. May contribute to the homeostatic control of glutamine synthesis in roots. The chain is Glutamine synthetase cytosolic isozyme 1-4 from Arabidopsis thaliana (Mouse-ear cress).